Consider the following 703-residue polypeptide: Elongation factor G (703 aa).

A tr-type G domain is found at 9-292 (ERTRNIGIMA…AVVDYLPGPL (284 aa)). GTP-binding positions include 18–25 (AHIDAGKT), 91–95 (DTPGH), and 145–148 (NKMD).

It belongs to the TRAFAC class translation factor GTPase superfamily. Classic translation factor GTPase family. EF-G/EF-2 subfamily.

Its subcellular location is the cytoplasm. Functionally, catalyzes the GTP-dependent ribosomal translocation step during translation elongation. During this step, the ribosome changes from the pre-translocational (PRE) to the post-translocational (POST) state as the newly formed A-site-bound peptidyl-tRNA and P-site-bound deacylated tRNA move to the P and E sites, respectively. Catalyzes the coordinated movement of the two tRNA molecules, the mRNA and conformational changes in the ribosome. This is Elongation factor G from Leuconostoc mesenteroides subsp. mesenteroides (strain ATCC 8293 / DSM 20343 / BCRC 11652 / CCM 1803 / JCM 6124 / NCDO 523 / NBRC 100496 / NCIMB 8023 / NCTC 12954 / NRRL B-1118 / 37Y).